Here is a 36-residue protein sequence, read N- to C-terminus: Potassium channel toxin alpha-KTx 16.9 (36 aa).

3 disulfide bridges follow: Cys7–Cys28, Cys13–Cys33, and Cys17–Cys35.

This sequence belongs to the short scorpion toxin superfamily. Potassium channel inhibitor family. Alpha-KTx 16 subfamily. In terms of tissue distribution, expressed by the venom gland.

Its subcellular location is the secreted. In terms of biological role, poorly competes with (125)I-kaliotoxin binding on rat brain synaptosome (IC(50)&gt;100 nM). Is a poor Kv1.3/KCNA3 ligand. May have as real target KCa1.1/KCNMA1 channel. Shows weak toxicity on mice. The sequence is that of Potassium channel toxin alpha-KTx 16.9 from Buthus paris (Scorpion).